Reading from the N-terminus, the 334-residue chain is MGNCLKCFQSAAEQSMPTNASSPNSHNSNSNACQTATSLANCYESVGINPNANERCALETDELLSSRTPLKPAKANNCDTKRNSFKSLGLLNGSAPTMSDIITTAVQESMEVSHQTLSKLFDVYKDPDDEEMILTDGIERLCNDLNYQPDEFAILVLAWCLDASQMCRFTKVEFIEGLHKMRADTIDSIRVRLEQTIEMLKADAEMFKQLYRFTFRFGLEPDQRVLSLEMAIDLWKLVFTVQTPDLFSNWIHFLEKHPNIRRIPKDTWNMYLNFTEQCDIQNYDDTEAWPSLFDDFVDYEKSRALVSSGIHDDDNNNDDPLQSHVKAEDPGLVS.

Residues 112-301 (VSHQTLSKLF…LFDDFVDYEK (190 aa)) form the DCUN1 domain. The interval 308 to 334 (SGIHDDDNNNDDPLQSHVKAEDPGLVS) is disordered. Basic and acidic residues predominate over residues 325-334 (VKAEDPGLVS).

The protein resides in the cell membrane. Promotes neddylation of cullin components of SCF-type E3 ubiquitin ligase complexes and thus regulates SCF-type complex activity. Function promotes cell proliferation. The protein is DCN1-like protein 3 of Drosophila melanogaster (Fruit fly).